The following is a 343-amino-acid chain: Ribosomal RNA small subunit methyltransferase H (343 aa).

S-adenosyl-L-methionine contacts are provided by residues 39–41 (AGH), Asp-58, Phe-87, Asp-108, and Gln-115.

The protein belongs to the methyltransferase superfamily. RsmH family.

The protein localises to the cytoplasm. The catalysed reaction is cytidine(1402) in 16S rRNA + S-adenosyl-L-methionine = N(4)-methylcytidine(1402) in 16S rRNA + S-adenosyl-L-homocysteine + H(+). Its function is as follows. Specifically methylates the N4 position of cytidine in position 1402 (C1402) of 16S rRNA. This is Ribosomal RNA small subunit methyltransferase H from Bifidobacterium adolescentis (strain ATCC 15703 / DSM 20083 / NCTC 11814 / E194a).